We begin with the raw amino-acid sequence, 148 residues long: uncharacterized protein (148 aa).

The chain crosses the membrane as a helical span at residues 1–21 (MLQNYAIVLGMAVAVAIWYFF). The disordered stretch occupies residues 27 to 61 (APPGPNPPKPDPPKPDPPKMHMPKKKPHWMDPHLT).

The protein localises to the host membrane. This is an uncharacterized protein from Frog virus 3 (isolate Goorha) (FV-3).